The chain runs to 318 residues: Zinc chaperone YjiA (318 aa).

Position 11 to 19 (11 to 19 (GFLGAGKTT)) interacts with GTP. The Zn(2+) site is built by E37, E42, C66, E74, and H114. The CXCC motif motif lies at 64-67 (CICC). Position 161 (D161) interacts with GTP. Residues E167, H170, and H187 each coordinate Zn(2+). In terms of domain architecture, CobW C-terminal spans 224 to 315 (ISSIVVELDY…EEEIRAAFAG (92 aa)).

Belongs to the SIMIBI class G3E GTPase family. ZNG1 subfamily. Monomer in the apo form. Metal binding induces oligomerization. Forms homodimers and higher oligomers.

It carries out the reaction GTP + H2O = GDP + phosphate + H(+). Its activity is regulated as follows. GTPase activity is inhibited by metal binding. Activity is decreased in the presence of Co(II) or Ni(II), and is completely inhibited in the presence of Zn(II). Its function is as follows. Zinc chaperone that directly transfers zinc cofactor to target proteins, thereby activating them. Zinc is transferred from the CXCC motif in the GTPase domain to the zinc binding site in target proteins in a process requiring GTP hydrolysis. This Escherichia coli (strain K12) protein is Zinc chaperone YjiA (yjiA).